A 452-amino-acid chain; its full sequence is MDTPRVLLWAIFLISFLWDLPGFQQASISSSSSTELDSTKDVENRKGGKMQRTPQESAEGRTPKEHRPRPNELRRRLPGQSLGQEPPGRGPRVVPHEYMLSIYRTYSIAEKLGINASFFQSSKSANTITSFVDRGLDDLSHTPLRRQKYLFDVSTLSDKEELVGAELRLYRQAPPTPWGPQTRPLHLQLFPCLSPLLLDSRTLDPQGPTEAGWEVFDVWQVLRPQPWKQLCLELRAVWGELDARDSGARPRGPQQSPPLDLRSLGFGRRVRPPQERALLVVFTRSQRKNLFTEMHEQLGSAEAAGAEGSWPAPSGAPDAGSWLPSPGRRRRRTALSSRHGKRHGKKSRLRCSRKPLHVNFKELGWDDWIIAPLEYEAYHCEGVCDFPLRSHLEPTNHAIIQTLMNSMDPGSTPPSCCVPTKLTPISILYIDAGNNVVYKQYEDMVVESCGCR.

Residues 1 to 22 (MDTPRVLLWAIFLISFLWDLPG) form the signal peptide. A propeptide spanning residues 23–332 (FQQASISSSS…LPSPGRRRRR (310 aa)) is cleaved from the precursor. The segment at 29–93 (SSSSSTELDS…QEPPGRGPRV (65 aa)) is disordered. Basic and acidic residues-rich tracts occupy residues 37–46 (DSTKDVENRK) and 58–75 (AEGRTPKEHRPRPNELRR). A glycan (N-linked (GlcNAc...) asparagine) is linked at Asn-115. 2 disordered regions span residues 244–267 (RDSGARPRGPQQSPPLDLRSLGFG) and 301–348 (AEAA…KKSR). The segment covering 301–317 (AEAAGAEGSWPAPSGAP) has biased composition (low complexity). Residues 327 to 348 (GRRRRRTALSSRHGKRHGKKSR) are compositionally biased toward basic residues. 3 disulfide bridges follow: Cys-351–Cys-417, Cys-380–Cys-449, and Cys-384–Cys-451.

Belongs to the TGF-beta family. As to quaternary structure, homodimer; disulfide-linked.

The protein resides in the secreted. Growth factor that controls proliferation and cellular differentiation in the retina and bone formation. Plays a key role in regulating apoptosis during retinal development. Establishes dorsal-ventral positional information in the retina and controls the formation of the retinotectal map. Required for normal formation of bones and joints in the limbs, skull, digits and axial skeleton. Plays a key role in establishing boundaries between skeletal elements during development. Regulation of GDF6 expression seems to be a mechanism for evolving species-specific changes in skeletal structures. Seems to positively regulate differentiation of chondrogenic tissue through the growth factor receptors subunits BMPR1A, BMPR1B, BMPR2 and ACVR2A, leading to the activation of SMAD1-SMAD5-SMAD8 complex. The regulation of chondrogenic differentiation is inhibited by NOG. Also involved in the induction of adipogenesis from mesenchymal stem cells. This mechanism acts through the growth factor receptors subunits BMPR1A, BMPR2 and ACVR2A and the activation of SMAD1-SMAD5-SMAD8 complex and MAPK14/p38. The protein is Growth/differentiation factor 6 (Gdf6) of Rattus norvegicus (Rat).